A 273-amino-acid polypeptide reads, in one-letter code: Outer surface protein A (273 aa).

An N-terminal signal peptide occupies residues 1–16; it reads MKKYLLGIGLILALIA. The N-palmitoyl cysteine moiety is linked to residue cysteine 17. Cysteine 17 is lipidated: S-diacylglycerol cysteine.

It belongs to the OspA lipoprotein family.

The protein localises to the cell outer membrane. The protein resides in the cell surface. This Borreliella burgdorferi (strain N40) (Borrelia burgdorferi) protein is Outer surface protein A.